The chain runs to 673 residues: ATP-binding cassette sub-family G member 8 (673 aa).

Basic and acidic residues predominate over residues 1–11 (MAGKAAEERGL). The interval 1–25 (MAGKAAEERGLPKGATPQDTSGLQD) is disordered. Topologically, residues 1 to 416 (MAGKAAEERG…ISNDFRDLPT (416 aa)) are cytoplasmic. The ABC transporter domain maps to 47-313 (LEVRDLNYQV…FTAIGYPCPR (267 aa)). In terms of domain architecture, ABC transmembrane type-2 spans 411-665 (FRDLPTLLIH…VLYYVSLRFI (255 aa)). Residues 417–437 (LLIHGAEACLMSMTIGFLYFG) traverse the membrane as a helical segment. Residues 438 to 447 (HGSIQLSFMD) lie on the Extracellular side of the membrane. Residues 448–468 (TAALLFMIGALIPFNVILDVI) traverse the membrane as a helical segment. Topologically, residues 469–497 (SKCYSERAMLYYELEDGLYTTGPYFFAKI) are cytoplasmic. Residues 498 to 518 (LGELPEHCAYIIIYGMPTYWL) form a helical membrane-spanning segment. The Extracellular segment spans residues 519-527 (ANLRPGLQP). Residues 528–548 (FLLHFLLVWLVVFCCRIMALA) form a helical membrane-spanning segment. Topologically, residues 549–555 (AAALLPT) are cytoplasmic. The helical transmembrane segment at 556–576 (FHMASFFSNALYNSFYLAGGF) threads the bilayer. Residues 577–639 (MINLSSLWTV…LSVMELDSYP (63 aa)) lie on the Extracellular side of the membrane. Residue Asn-619 is glycosylated (N-linked (GlcNAc...) asparagine). The helical transmembrane segment at 640 to 660 (LYAIYLIVIGLSGGFMVLYYV) threads the bilayer. The Cytoplasmic segment spans residues 661-673 (SLRFIKQKPSQDW).

The protein belongs to the ABC transporter superfamily. ABCG family. Eye pigment precursor importer (TC 3.A.1.204) subfamily. In terms of assembly, heterodimer with ABCG8. Mg(2+) serves as cofactor. In terms of processing, N-glycosylated. As to expression, predominantly expressed in the liver. Low expression levels in the small intestine and colon. Very low levels in other tissues, including brain, heart and spleen.

Its subcellular location is the cell membrane. It localises to the apical cell membrane. It carries out the reaction cholesterol(in) + ATP + H2O = cholesterol(out) + ADP + phosphate + H(+). It catalyses the reaction sitosterol(in) + ATP + H2O = sitosterol(out) + ADP + phosphate + H(+). With respect to regulation, the ATPase activity of the heterodimer is stimulated by cholate. Taurocholate, glycocholate, taurochenodeoxycholate, glycochenodeoxycholate and taurodeoxycholate also stimulate ATPase activity, but to a lower degree. Glycodeoxycholate has no significant effect on ATPase activity. ATPase activity is inhibited by vanadate and by berillium fluoride. In terms of biological role, ABCG5 and ABCG8 form an obligate heterodimer that mediates Mg(2+)- and ATP-dependent sterol transport across the cell membrane. Plays an essential role in the selective transport of the dietary cholesterol in and out of the enterocytes and in the selective sterol excretion by the liver into bile. Required for normal sterol homeostasis. The heterodimer with ABCG5 has ATPase activity. The polypeptide is ATP-binding cassette sub-family G member 8 (Homo sapiens (Human)).